We begin with the raw amino-acid sequence, 1469 residues long: snRNA-activating protein complex subunit 4 (1469 aa).

Residues 16 to 82 are disordered; it reads ELERILDPGS…DPKDKTLPED (67 aa). Residues 24-36 show a composition bias toward low complexity; that stretch reads GSSGSHVEISESS. Residues 37–53 show a composition bias toward acidic residues; it reads LESDSEADSLPSEDLDP. S68 is subject to Phosphoserine. Positions 84-133 are SNAPC5-binding; it reads ETCLQLNMVYQEVIQEKLAEANLLLAQNREQQEELMRDLAGSKGTKVKDG. The Myb-like 1 domain occupies 250–288; sequence EEALLGNRLDSHDWEKISNINFEGSRSAEEIRKFWQNSE. The 55-residue stretch at 289 to 343 folds into the HTH myb-type 1 domain; sequence HPSINKQEWSREEEERLQAIAAAHGHLEWQKIAEELGTSRSAFQCLQKFQQHNKA. The segment at residues 317–341 is a DNA-binding region (H-T-H motif); sequence WQKIAEELGTSRSAFQCLQKFQQHN. One can recognise a Myb-like 2 domain in the interval 344 to 395; the sequence is LKRKEWTEEEDRMLTQLVQEMRVGSHIPYRRIVYYMEGRDSMQLIYRWTKSL. 2 HTH myb-type domains span residues 396–451 and 452–503; these read DPGL…HFSL and KKGR…GKKQ. 2 DNA-binding regions (H-T-H motif) span residues 424–447 and 476–499; these read WFKI…LRRL and WAKI…KIMM. Disordered stretches follow at residues 501–558, 577–661, 685–710, 834–894, 932–981, 1001–1051, 1121–1167, and 1184–1266; these read KKQG…GDRA, QSTS…QALE, RSCT…SGDS, ASSS…KTVS, PLPH…DKRL, PAAS…PSPT, AAQG…PAEA, and IPEP…GPEK. The segment covering 503–516 has biased composition (basic residues); the sequence is QGLRRRRRRARHSV. The segment covering 519 to 541 has biased composition (low complexity); the sequence is SSTSSSGSSSGSSGGSSSSSSSS. At S599 the chain carries Phosphoserine. A compositionally biased stretch (polar residues) spans 602–618; the sequence is KGSSASQGGSKEASTTA. S626 carries the post-translational modification Phosphoserine. Residues 932–944 show a composition bias toward pro residues; sequence PLPHTPHGRPAPG. Residues 951-968 are compositionally biased toward low complexity; sequence PLSGPGAPAAAKPGTSGS. The segment covering 1014–1029 has biased composition (polar residues); sequence ISVSCPESGLGQSQAP. Pro residues predominate over residues 1039-1051; sequence EAPPFLPAAPSPT. T1157 carries the phosphothreonine modification. Positions 1184–1195 are enriched in basic and acidic residues; the sequence is IPEPRTSSHADP. A Phosphoserine modification is found at S1224. Residues 1281–1393 form an SNAPC2-binding region; it reads ATQQWLGGQR…QGVRTTLSVP (113 aa). A phosphoserine mark is found at S1398, S1400, and S1440. A disordered region spans residues 1430–1449; the sequence is APDSGKCSASSCLDTSNDPD. Over residues 1436 to 1445 the composition is skewed to polar residues; it reads CSASSCLDTS.

As to quaternary structure, part of the SNAPc complex composed of 5 subunits: SNAPC1, SNAPC2, SNAPC3, SNAPC4 and SNAPC5. SNAPC4 interacts with SNAPC1, SNAPC2, SNAPC5, BRF2 and TBP.

The protein resides in the nucleus. Functionally, part of the SNAPc complex required for the transcription of both RNA polymerase II and III small-nuclear RNA genes. Binds to the proximal sequence element (PSE), a non-TATA-box basal promoter element common to these 2 types of genes. Recruits TBP and BRF2 to the U6 snRNA TATA box. The protein is snRNA-activating protein complex subunit 4 of Homo sapiens (Human).